We begin with the raw amino-acid sequence, 414 residues long: Dihydroorotase (414 aa).

His57 and His59 together coordinate Zn(2+). Residues 59-61 (HLR) and Asn91 each bind substrate. Positions 135, 164, 204, and 272 each coordinate Zn(2+). N6-carboxylysine is present on Lys135. The active site involves Asp272. Residues His276 and 286–287 (AG) contribute to the substrate site.

This sequence belongs to the metallo-dependent hydrolases superfamily. DHOase family. Class I DHOase subfamily. Zn(2+) serves as cofactor.

The enzyme catalyses (S)-dihydroorotate + H2O = N-carbamoyl-L-aspartate + H(+). The protein operates within pyrimidine metabolism; UMP biosynthesis via de novo pathway; (S)-dihydroorotate from bicarbonate: step 3/3. Catalyzes the reversible cyclization of carbamoyl aspartate to dihydroorotate. In Pyrococcus furiosus (strain ATCC 43587 / DSM 3638 / JCM 8422 / Vc1), this protein is Dihydroorotase.